The chain runs to 148 residues: Nucleoside diphosphate kinase 1 (148 aa).

Residues Lys9, Phe57, Arg85, Thr91, Arg102, and Asn112 each coordinate ATP. His115 (pros-phosphohistidine intermediate) is an active-site residue.

Belongs to the NDK family. Mg(2+) is required as a cofactor.

It catalyses the reaction a 2'-deoxyribonucleoside 5'-diphosphate + ATP = a 2'-deoxyribonucleoside 5'-triphosphate + ADP. The catalysed reaction is a ribonucleoside 5'-diphosphate + ATP = a ribonucleoside 5'-triphosphate + ADP. Major role in the synthesis of nucleoside triphosphates other than ATP. The ATP gamma phosphate is transferred to the NDP beta phosphate via a ping-pong mechanism, using a phosphorylated active-site intermediate. This Mesembryanthemum crystallinum (Common ice plant) protein is Nucleoside diphosphate kinase 1 (NDKP1).